The chain runs to 451 residues: Probable M18 family aminopeptidase 1 (451 aa).

3 residues coordinate Zn(2+): H93, H168, and H426.

This sequence belongs to the peptidase M18 family. The cofactor is Zn(2+).

The sequence is that of Probable M18 family aminopeptidase 1 (apeA) from Thermotoga maritima (strain ATCC 43589 / DSM 3109 / JCM 10099 / NBRC 100826 / MSB8).